The chain runs to 310 residues: Methionyl-tRNA formyltransferase (310 aa).

110–113 (SLLP) serves as a coordination point for (6S)-5,6,7,8-tetrahydrofolate.

Belongs to the Fmt family.

The catalysed reaction is L-methionyl-tRNA(fMet) + (6R)-10-formyltetrahydrofolate = N-formyl-L-methionyl-tRNA(fMet) + (6S)-5,6,7,8-tetrahydrofolate + H(+). In terms of biological role, attaches a formyl group to the free amino group of methionyl-tRNA(fMet). The formyl group appears to play a dual role in the initiator identity of N-formylmethionyl-tRNA by promoting its recognition by IF2 and preventing the misappropriation of this tRNA by the elongation apparatus. The protein is Methionyl-tRNA formyltransferase of Streptomyces griseus subsp. griseus (strain JCM 4626 / CBS 651.72 / NBRC 13350 / KCC S-0626 / ISP 5235).